The following is a 489-amino-acid chain: MRVLHVCSELYPILKTGGLADVTAALPPALAGFGVDSRVLVPGFPAFINAIKDKQLLINIPSRFGAEEINIFLAKISNTKIDIYVIDAPSLFARPGNPYADSSNQAYADNYLRFALLGWVAARISEGLDAKWKPEIVHSHDWHAGLVPAYIKASELASGKKAVKTVFTVHNLAYQGLFPMSVFAELDLPGIFLSMNGLEFYGQVSFMKAGLYFADKITTVSPTYAKEIQIYEQGCGLEGLLADRHNDLYGVLNGVDPQIWNPKKDSLIATNYSSTTVATGKAKCKLALQQMMGLAEKEDALLFGIVTRLTEQKGLNLLIEAIGEITSRGGQIVLLGSGDKALEEVFLAAAKKYSKSIAVQIGYDEEQAHRIIAGSDVIMVPSRFEPCGLTQLYGLTYGTLPLVHKVGGLADTVIDSSLENLADGTATGFVFDEFSVESLTLAIRRAFALYNRKTDWKKVRKTAMQQQVTWDSSAEKIYQIYKNLVRENN.

Position 15 (Lys-15) interacts with ADP-alpha-D-glucose.

It belongs to the glycosyltransferase 1 family. Bacterial/plant glycogen synthase subfamily.

It carries out the reaction [(1-&gt;4)-alpha-D-glucosyl](n) + ADP-alpha-D-glucose = [(1-&gt;4)-alpha-D-glucosyl](n+1) + ADP + H(+). Its pathway is glycan biosynthesis; glycogen biosynthesis. Its function is as follows. Synthesizes alpha-1,4-glucan chains using ADP-glucose. This Francisella tularensis subsp. tularensis (strain SCHU S4 / Schu 4) protein is Glycogen synthase.